The sequence spans 139 residues: Galactoside-binding soluble lectin 13 (139 aa).

A Galectin domain is found at 6 to 138 (VPYKLPVSLS…DISLTSVCVC (133 aa)).

Homodimer; disulfide-linked. As to expression, detected in adult and fetal spleen, fetal kidney, adult urinary bladder and placenta. Placental expression originates predominantly from the syncytiotrophoblast.

Its subcellular location is the cytoplasm. The protein localises to the nucleus matrix. In terms of biological role, binds beta-galactoside and lactose. Strong inducer of T-cell apoptosis. Has hemagglutinating activity towards chicken erythrocytes. The chain is Galactoside-binding soluble lectin 13 (LGALS13) from Homo sapiens (Human).